The primary structure comprises 97 residues: Glutamyl-tRNA(Gln) amidotransferase subunit C (97 aa).

Belongs to the GatC family. As to quaternary structure, heterotrimer of A, B and C subunits.

The enzyme catalyses L-glutamyl-tRNA(Gln) + L-glutamine + ATP + H2O = L-glutaminyl-tRNA(Gln) + L-glutamate + ADP + phosphate + H(+). The catalysed reaction is L-aspartyl-tRNA(Asn) + L-glutamine + ATP + H2O = L-asparaginyl-tRNA(Asn) + L-glutamate + ADP + phosphate + 2 H(+). In terms of biological role, allows the formation of correctly charged Asn-tRNA(Asn) or Gln-tRNA(Gln) through the transamidation of misacylated Asp-tRNA(Asn) or Glu-tRNA(Gln) in organisms which lack either or both of asparaginyl-tRNA or glutaminyl-tRNA synthetases. The reaction takes place in the presence of glutamine and ATP through an activated phospho-Asp-tRNA(Asn) or phospho-Glu-tRNA(Gln). This chain is Glutamyl-tRNA(Gln) amidotransferase subunit C, found in Saccharolobus solfataricus (strain ATCC 35092 / DSM 1617 / JCM 11322 / P2) (Sulfolobus solfataricus).